The sequence spans 149 residues: Large-conductance mechanosensitive channel (149 aa).

A run of 2 helical transmembrane segments spans residues 8 to 28 (FIMR…SAFT) and 74 to 94 (IGSV…LFLI).

Belongs to the MscL family. Homopentamer.

It localises to the cell membrane. Channel that opens in response to stretch forces in the membrane lipid bilayer. May participate in the regulation of osmotic pressure changes within the cell. The polypeptide is Large-conductance mechanosensitive channel (Enterococcus faecalis (strain ATCC 700802 / V583)).